The chain runs to 183 residues: MATPRPCADGPCCSHPSAVLGVQQTLEEMDFERGIWSAALNGDLGRVKHLIQKAEDPSQPDSAGYTALHYASRNGHYAVCQFLLESGAKCDAQTHGGATALHRASYCGHTEIARLLLSHGSNPRVVDDDGMTSLHKAAERGHGDICSLLLQHSPALKAIRDRKARLACDLLPCNSDLRDLLSS.

ANK repeat units follow at residues 30 to 59 (DFERGIWSAALNGDLGRVKHLIQKAEDPSQ), 63 to 92 (AGYTALHYASRNGHYAVCQFLLESGAKCDA), 96 to 125 (GGATALHRASYCGHTEIARLLLSHGSNPRV), and 129 to 158 (DGMTSLHKAAERGHGDICSLLLQHSPALKA). Phosphoserine is present on serine 153.

The protein belongs to the ANKRD39 family.

This Homo sapiens (Human) protein is Ankyrin repeat domain-containing protein 39 (ANKRD39).